The following is a 375-amino-acid chain: Deoxyribonuclease-2 (375 aa).

The N-terminal stretch at 1–21 is a signal peptide; that stretch reads MGLSPAAVLIFLLLGVSQTYA. Residue N131 is glycosylated (N-linked (GlcNAc...) asparagine).

This sequence belongs to the DNase II family.

It carries out the reaction Endonucleolytic cleavage to nucleoside 3'-phosphates and 3'-phosphooligonucleotide end-products.. Functionally, hydrolyzes DNA under acidic conditions with a preference for double-stranded DNA. Implicated in apoptosis. This Caenorhabditis elegans protein is Deoxyribonuclease-2 (nuc-1).